Consider the following 235-residue polypeptide: Glycerol-3-phosphate acyltransferase (235 aa).

The next 6 membrane-spanning stretches (helical) occupy residues 4-24 (LLAILAVSYLIGSIPTGIMAG), 56-76 (TVTLIDIIKGVVAAVSVVAFF), 94-114 (LLAGMSAVVGHVFTVFAGFKG), 124-144 (MLIGIAPVSMLMVIGIFLLTI), 152-172 (VASMLAAVAFPLIIAIRKYIF), and 191-211 (FHDSLDYHLMIFGLIVALGIL).

The protein belongs to the PlsY family. Probably interacts with PlsX.

The protein localises to the cell inner membrane. The enzyme catalyses an acyl phosphate + sn-glycerol 3-phosphate = a 1-acyl-sn-glycero-3-phosphate + phosphate. It participates in lipid metabolism; phospholipid metabolism. Functionally, catalyzes the transfer of an acyl group from acyl-phosphate (acyl-PO(4)) to glycerol-3-phosphate (G3P) to form lysophosphatidic acid (LPA). This enzyme utilizes acyl-phosphate as fatty acyl donor, but not acyl-CoA or acyl-ACP. The polypeptide is Glycerol-3-phosphate acyltransferase (Chlorobium limicola (strain DSM 245 / NBRC 103803 / 6330)).